A 393-amino-acid chain; its full sequence is Chorismate synthase (393 aa).

Arginine 39 and arginine 45 together coordinate NADP(+). FMN is bound by residues 133 to 135 (RSS), 256 to 257 (NA), glycine 301, 316 to 320 (KPIPT), and arginine 342.

This sequence belongs to the chorismate synthase family. Homotetramer. FMNH2 is required as a cofactor.

It carries out the reaction 5-O-(1-carboxyvinyl)-3-phosphoshikimate = chorismate + phosphate. Its pathway is metabolic intermediate biosynthesis; chorismate biosynthesis; chorismate from D-erythrose 4-phosphate and phosphoenolpyruvate: step 7/7. Catalyzes the anti-1,4-elimination of the C-3 phosphate and the C-6 proR hydrogen from 5-enolpyruvylshikimate-3-phosphate (EPSP) to yield chorismate, which is the branch point compound that serves as the starting substrate for the three terminal pathways of aromatic amino acid biosynthesis. This reaction introduces a second double bond into the aromatic ring system. The chain is Chorismate synthase from Lysinibacillus sphaericus (strain C3-41).